The sequence spans 715 residues: Methionine--tRNA ligase (715 aa).

Positions proline 20–histidine 30 match the 'HIGH' region motif. Positions 151, 154, 163, and 167 each coordinate Zn(2+). The 'KMSKS' region signature appears at lysine 334 to threonine 338. An ATP-binding site is contributed by lysine 337. The disordered stretch occupies residues alanine 559–aspartate 593. The tRNA-binding domain maps to aspartate 613–arginine 715.

The protein belongs to the class-I aminoacyl-tRNA synthetase family. MetG type 1 subfamily. As to quaternary structure, homodimer. Requires Zn(2+) as cofactor.

It is found in the cytoplasm. The catalysed reaction is tRNA(Met) + L-methionine + ATP = L-methionyl-tRNA(Met) + AMP + diphosphate. Is required not only for elongation of protein synthesis but also for the initiation of all mRNA translation through initiator tRNA(fMet) aminoacylation. This Methanosarcina mazei (strain ATCC BAA-159 / DSM 3647 / Goe1 / Go1 / JCM 11833 / OCM 88) (Methanosarcina frisia) protein is Methionine--tRNA ligase.